Reading from the N-terminus, the 251-residue chain is 2,3-bisphosphoglycerate-dependent phosphoglycerate mutase (251 aa).

Residues 13–20 (RHGESEWN), 26–27 (TG), arginine 65, 92–95 (ERHY), lysine 103, 119–120 (RR), and 186–187 (GN) each bind substrate. Residue histidine 14 is the Tele-phosphohistidine intermediate of the active site. Residue glutamate 92 is the Proton donor/acceptor of the active site.

This sequence belongs to the phosphoglycerate mutase family. BPG-dependent PGAM subfamily.

The catalysed reaction is (2R)-2-phosphoglycerate = (2R)-3-phosphoglycerate. Its pathway is carbohydrate degradation; glycolysis; pyruvate from D-glyceraldehyde 3-phosphate: step 3/5. Functionally, catalyzes the interconversion of 2-phosphoglycerate and 3-phosphoglycerate. This Rhodococcus jostii (strain RHA1) protein is 2,3-bisphosphoglycerate-dependent phosphoglycerate mutase.